A 108-amino-acid polypeptide reads, in one-letter code: Cell cycle protein GpsB (108 aa).

Residues 32–69 are a coiled coil; the sequence is LDNVIKDYENFNAQIEALKAENEALKKAKYQARNTVSA.

This sequence belongs to the GpsB family. As to quaternary structure, forms polymers through the coiled coil domains. Interacts with PBP1, MreC and EzrA.

Its subcellular location is the cytoplasm. Functionally, divisome component that associates with the complex late in its assembly, after the Z-ring is formed, and is dependent on DivIC and PBP2B for its recruitment to the divisome. Together with EzrA, is a key component of the system that regulates PBP1 localization during cell cycle progression. Its main role could be the removal of PBP1 from the cell pole after pole maturation is completed. Also contributes to the recruitment of PBP1 to the division complex. Not essential for septum formation. The protein is Cell cycle protein GpsB of Streptococcus pyogenes serotype M49 (strain NZ131).